The following is a 68-amino-acid chain: DNA-directed RNA polymerase subunit omega (68 aa).

It belongs to the RNA polymerase subunit omega family. The RNAP catalytic core consists of 2 alpha, 1 beta, 1 beta' and 1 omega subunit. When a sigma factor is associated with the core the holoenzyme is formed, which can initiate transcription.

It catalyses the reaction RNA(n) + a ribonucleoside 5'-triphosphate = RNA(n+1) + diphosphate. In terms of biological role, promotes RNA polymerase assembly. Latches the N- and C-terminal regions of the beta' subunit thereby facilitating its interaction with the beta and alpha subunits. This is DNA-directed RNA polymerase subunit omega from Neisseria meningitidis serogroup C (strain 053442).